A 255-amino-acid chain; its full sequence is MLIILTGLPSVGKSTFSKAFSKKMAEKNIDNIILGTDLIRESFPVWKESYEEFIRDSNNYLIKEALENKFSVIVDDTNYYNSKRRDLMNIAKECDTNYVTIYLKAPLNLLLKRNIERGQKIPNEVIKNMYEKFDTPGTKYAWDLPDITVDTTEKIDYNEILNEILEINENKNLKIEEDKIPKSEPVESDLVKIDSLTRNIVGNLIKTGKIDKKDIKLLSEIRKSFLKDCKKIESEKLDFEKIEKDFLDYLNKNLK.

Residue Gly-7–Ser-14 coordinates ATP.

Belongs to the L-seryl-tRNA(Sec) kinase family.

The catalysed reaction is L-seryl-tRNA(Sec) + ATP = O-phospho-L-seryl-tRNA(Sec) + ADP. The protein operates within aminoacyl-tRNA biosynthesis; selenocysteinyl-tRNA(Sec) biosynthesis; selenocysteinyl-tRNA(Sec) from L-seryl-tRNA(Sec) (archaeal/eukaryal route): step 1/2. Its function is as follows. Specifically phosphorylates seryl-tRNA(Sec) to O-phosphoseryl-tRNA(Sec), an activated intermediate for selenocysteine biosynthesis. The polypeptide is L-seryl-tRNA(Sec) kinase (pstK) (Methanococcus maripaludis (strain DSM 14266 / JCM 13030 / NBRC 101832 / S2 / LL)).